The primary structure comprises 335 residues: E3 ubiquitin-protein ligase NLA (335 aa).

An SPX domain is found at 1–154 (MKFCKKYEEY…ESRQGQAFKT (154 aa)). The RING-type zinc finger occupies 231 to 280 (CSICLDTVFDPISLTCGHIYCYMCACSAASVNVVDGLKTAEATEKCPLCR).

In terms of assembly, interacts with UBC8. Interacts with PHT1-1 and PHT1-4. Forms homodimers (via RING domain). Interacts with UBC24/PHO2. Interacts with NPF2.13/NRT1.7. Interacts with NAC92/ORE1. In terms of tissue distribution, high expression in roots and stems, medium in seedlings, flowers, rosette and cauline leaves, and very low in siliques. Detected in cotyledons, hypocotyls, pedicel, receptacle, pistil, sepal, filament of stamen and at the two ends of developing siliques.

It localises to the nucleus speckle. Its subcellular location is the nucleus. The protein resides in the cell membrane. The catalysed reaction is S-ubiquitinyl-[E2 ubiquitin-conjugating enzyme]-L-cysteine + [acceptor protein]-L-lysine = [E2 ubiquitin-conjugating enzyme]-L-cysteine + N(6)-ubiquitinyl-[acceptor protein]-L-lysine.. It functions in the pathway protein modification; protein ubiquitination. Its function is as follows. E3 ubiquitin-protein ligase that mediates E2-dependent protein ubiquitination. Plays a role in salicylic acid-mediated negative feedback regulation of salicylic acid (SA) accumulation. May be involved in the overall regulation of SA, benzoic acid and phenylpropanoid biosynthesis. Involved in defense response. May act as negative regulator of resistance to the necrotrophic fungal pathogen Plectosphaerella cucumerina by modulating the accumulation of the phytoalexin camalexin and the salicylic acid- and jasmonate- dependent defense pathways. Controls the adaptability to nitrogen limitation by channeling the phenylpropanoid metabolic flux to the induced anthocyanin synthesis. Involved in the regulation of inorganic phosphate (Pi) homeostasis in a nitrate-dependent fashion. Directs the ubiquitination and subsequent degradation of the plasma membrane-localized inorganic phosphate transporters PHT1-1 and PHT1-4, to maintain phosphate homeostasis. The ubiquitination of PHTs triggers their clathrin-dependent endocytosis and trafficking to the vacuole through the endosomal pathway for degradation. Functions cooperatively with UBC24/PHO2 to regulate the abundance of PHT1-1, PHT1-2 and PHT1-3 in different subcellular compartments. Regulates Pi homeostasis by mediating, cooperatively with UBC24/PHO2, polyubiquitination of PHT1-4 and its targeting for degradation. Directs the polyubiquitination and subsequent degradation of the plasma membrane-localized nitrate transporter NPF2.13/NRT1.7, to help plants to adapt to nitrogen deficiency by regulating the source-to-sink remobilization of nitrate. Regulates leaf senescence during nitrogen deficiency by mediating, cooperatively with UBC24/PHO2, polyubiquitination of NAC92/ORE1 and its targeting for degradation. The sequence is that of E3 ubiquitin-protein ligase NLA from Arabidopsis thaliana (Mouse-ear cress).